A 341-amino-acid chain; its full sequence is L-threonine 3-dehydrogenase (341 aa).

Cysteine 38 provides a ligand contact to Zn(2+). Catalysis depends on charge relay system residues threonine 40 and histidine 43. Positions 63, 64, 93, 96, 99, and 107 each coordinate Zn(2+). NAD(+)-binding positions include isoleucine 175, aspartate 195, arginine 200, 262 to 264 (LGI), and 286 to 287 (IY).

Belongs to the zinc-containing alcohol dehydrogenase family. As to quaternary structure, homotetramer. Zn(2+) serves as cofactor.

The protein localises to the cytoplasm. It carries out the reaction L-threonine + NAD(+) = (2S)-2-amino-3-oxobutanoate + NADH + H(+). The protein operates within amino-acid degradation; L-threonine degradation via oxydo-reductase pathway; glycine from L-threonine: step 1/2. Catalyzes the NAD(+)-dependent oxidation of L-threonine to 2-amino-3-ketobutyrate. The polypeptide is L-threonine 3-dehydrogenase (Shewanella baltica (strain OS223)).